A 780-amino-acid chain; its full sequence is Nuclear cap-binding protein subunit 1 (780 aa).

Residues 1–25 are disordered; sequence MSSYRGSTRPRKRTREGENYGFRPH. Phosphoserine is present on Ser29. An MIF4G domain is found at 34 to 249; the sequence is AARIKKDITF…KQLILSREND (216 aa). A disordered region spans residues 738–780; it reads ANEPVQENTSEEQEDTKMQPVDAVDEQPSENNQTAADATNEEK.

This sequence belongs to the NCBP1 family. Component of the nuclear cap-binding complex (CBC), a heterodimer composed of cbc1 and cbc2 that interacts with capped RNAs.

It localises to the cytoplasm. The protein resides in the perinuclear region. The protein localises to the nucleus. In terms of biological role, component of the CBC complex, which binds cotranscriptionally to the 5'-cap of pre-mRNAs and is involved in maturation, export and degradation of nuclear mRNAs. The polypeptide is Nuclear cap-binding protein subunit 1 (cbc1) (Schizosaccharomyces pombe (strain 972 / ATCC 24843) (Fission yeast)).